The primary structure comprises 1893 residues: Serine-aspartate repeat-containing protein I (1893 aa).

The N-terminal stretch at 1 to 54 (MNFKGVKLLKNSKKRLDFLPNTLNKYSIRKFTVGTASILVGATLFLGVSNEAEA) is a signal peptide. The interval 53-333 (EAAEKIDSPT…AHGINNKNKQ (281 aa)) is disordered. Residues 54–222 (AAEKIDSPTK…AEEPATKEEA (169 aa)) show a composition bias toward basic and acidic residues. 21 consecutive repeat copies span residues 72-83 (AATKEEAATTEE), 84-95 (PATKEEAATTEE), 96-107 (PATKEEAAIAEE), 108-119 (PATKEEAATTEE), 120-131 (PATKEEAAIAEE), 132-143 (PATKEEAATTEE), 144-155 (PATKEEAATTEE), 156-167 (PATKEEAAIAEE), 168-179 (PATKEEAATTEE), 180-191 (PATKEEAAIAEE), 192-203 (PATKEEAVTSEE), 204-215 (AATKEKAAIAEE), 216-227 (PATKEEAAIAEE), 228-239 (PETKEEAATTEE), 240-251 (PATKEEAAIAEE), 252-263 (AATKEKAVTSEE), 264-275 (AATKEKAAIAEE), 276-287 (AATKEKAAIAEE), 288-299 (PETKEEAATTEE), 300-311 (PETKEEAAIAEE), and 312-323 (PATKEKAVTSEE). Residues 72-323 (AATKEEAATT…TKEKAVTSEE (252 aa)) are 21 X 12 AA tandem repeat of [AP]-[AE]-T-K-E-[EK]-A-[AV]-[IT]-[AST]-E-E. A compositionally biased stretch (basic and acidic residues) spans 240–284 (PATKEEAAIAEEAATKEKAVTSEEAATKEKAAIAEEAATKEKAAI). Residues 286–302 (EEPETKEEAATTEEPET) are compositionally biased toward acidic residues. Basic and acidic residues predominate over residues 312-325 (PATKEKAVTSEEAH). The tract at residues 324-755 (AHGINNKNKQ…GSSTAQGDNP (432 aa)) is ligand binding A region. CNA-B domains follow at residues 756–874 (TYNL…YETP) and 875–984 (KYSL…YFDE). The disordered stretch occupies residues 941-1867 (KPEGLTQTTT…GNNTQNNGTL (927 aa)). A compositionally biased stretch (basic and acidic residues) spans 955–975 (DENKDADGEEVHVTITDHDDF). The span at 981-1836 (YFDEDSDADA…DSDADADADS (856 aa)) shows a compositional bias: acidic residues. Over residues 1837-1851 (DADKYHNDTADKSND) the composition is skewed to basic and acidic residues. The short motif at 1854 to 1858 (LPDTG) is the LPXTG sorting signal element. A Pentaglycyl murein peptidoglycan amidated threonine modification is found at Thr1857. A propeptide spans 1858–1893 (GNNTQNNGTLFGSLFAALGGLFLVGSRRKNKNNEEK) (removed by sortase).

This sequence belongs to the serine-aspartate repeat-containing protein (SDr) family.

The protein resides in the secreted. It localises to the cell wall. Its function is as follows. Responsible for collagen binding by S.saprophyticus. This Staphylococcus saprophyticus protein is Serine-aspartate repeat-containing protein I (sdrI).